The following is an 88-amino-acid chain: Snakin-1 (88 aa).

Residues 1–25 form the signal peptide; that stretch reads MKLFLLTLLLVTLVITPSLIQTTMA.

The protein belongs to the GASA family. Six disulfide bonds may be present. In terms of tissue distribution, expressed in tubers, stems, axillary and young floral buds, sepals, petals, stamens and carpels, but not in roots, stolons, shoot apex meristem or young leaves.

The protein localises to the secreted. Its subcellular location is the cell wall. Its function is as follows. Has an antimicrobial activity. Causes a rapid aggregation of both Gram-positive and Gram-negative bacteria, but the antimicrobial activity is not correlated with the capacity to aggregate bacteria. This is Snakin-1 (SN1) from Solanum tuberosum (Potato).